A 525-amino-acid polypeptide reads, in one-letter code: Cytochrome P450 monooxygenase ltmJ (525 aa).

A helical transmembrane segment spans residues Leu21–Asn43. An N-linked (GlcNAc...) asparagine glycan is attached at Asn136. Residue Cys465 coordinates heme.

Belongs to the cytochrome P450 family. Heme serves as cofactor.

It localises to the membrane. It participates in secondary metabolite biosynthesis. In terms of biological role, cytochrome P450 monooxygenase; part of the gene clusters that mediates the biosynthesis of lolitrems, indole-diterpene mycotoxins that are potent tremorgens in mammals, and are synthesized by clavicipitaceous fungal endophytes in association with their grass hosts. The geranylgeranyl diphosphate (GGPP) synthase ltmG is proposed to catalyze the first step in lolitrem biosynthesis. LtmG catalyzes a series of iterative condensations of isopentenyl diphosphate (IPP) with dimethylallyl diphosphate (DMAPP), geranyl diphosphate (GPP), and farnesyl diphosphate (FPP), to form GGPP. GGPP then condenses with indole-3-glycerol phosphate to form 3-geranylgeranylindole, an acyclic intermediate, to be incorporated into paxilline. Either ltmG or ltmC could be responsible for this step, as both are putative prenyl transferases. The FAD-dependent monooxygenase ltmM then catalyzes the epoxidation of the two terminal alkenes of the geranylgeranyl moiety, which is subsequently cyclized by ltmB, to paspaline. The cytochrome P450 monooxygenases ltmQ and ltmP can sequentially oxidize paspaline to terpendole E and terpendole F. Alternatively, ltmP converts paspaline to an intermediate which is oxidized by ltmQ to terpendole F. LtmF, ltmK, ltmE and ltmJ appear to be unique to the epichloe endophytes. The prenyltransferase ltmF is involved in the 27-hydroxyl-O-prenylation. The cytochrome P450 monooxygenase ltmK is required for the oxidative acetal ring formation. The multi-functional prenyltransferase ltmE is required for C20- and C21-prenylations of the indole ring of paspalanes and acts together with the cytochrome P450 monooxygenase ltmJ to yield lolitremanes by multiple oxidations and ring closures. The stereoisomer pairs of lolitriol and lolitrem N or lolitrem B and lolitrem F may be attributed to variations in the way in which ring closure can occur under the action of ltmJ. While the major product of this pathway is lolitrem B, the prenyl transferases and cytochrome P450 monooxygenases identified in this pathway have a remarkable versatility in their regio- and stereo-specificities to generate a diverse range of metabolites that are products of a metabolic grid rather than a linear pathway. The polypeptide is Cytochrome P450 monooxygenase ltmJ (ltmJ) (Epichloe festucae var. lolii (Neotyphodium lolii)).